We begin with the raw amino-acid sequence, 307 residues long: MRIVFAGTPDFAVPSLRSVTQRADVVAVYTQPDRPAGRGRELMPSPVKLEAVARGLPVYQPQTLRSPEMLEQLRVLRPDLIVVVAYGVILPEAVLAIPDDGCWNVHASLLPRWRGAAPIQRAIEAGDTETGVCLMQMEAGLDTGPVLMSLKTPINAHETSGQLHDRLAEMGAQLLSDGLGLLRAGLRPVPQPQLAAGVTYAHKLGKVEARLDWEQPAERLACRVRAFQPWPVAEVVLSGERVRIHEALALDLDHSQPPGKVLAASKEGIDVACVQGALRLCRLQREGGKAITAADYLNARRDLQVRA.

108–111 (SLLP) provides a ligand contact to (6S)-5,6,7,8-tetrahydrofolate.

The protein belongs to the Fmt family.

The enzyme catalyses L-methionyl-tRNA(fMet) + (6R)-10-formyltetrahydrofolate = N-formyl-L-methionyl-tRNA(fMet) + (6S)-5,6,7,8-tetrahydrofolate + H(+). Functionally, attaches a formyl group to the free amino group of methionyl-tRNA(fMet). The formyl group appears to play a dual role in the initiator identity of N-formylmethionyl-tRNA by promoting its recognition by IF2 and preventing the misappropriation of this tRNA by the elongation apparatus. This is Methionyl-tRNA formyltransferase from Xylella fastidiosa (strain M12).